The sequence spans 107 residues: Large ribosomal subunit protein bL21 (107 aa).

Belongs to the bacterial ribosomal protein bL21 family. As to quaternary structure, part of the 50S ribosomal subunit. Contacts protein L20.

In terms of biological role, this protein binds to 23S rRNA in the presence of protein L20. This is Large ribosomal subunit protein bL21 from Chlamydia trachomatis serovar L2 (strain ATCC VR-902B / DSM 19102 / 434/Bu).